A 315-amino-acid chain; its full sequence is Porphobilinogen deaminase (315 aa).

At Cys238 the chain carries S-(dipyrrolylmethanemethyl)cysteine.

The protein belongs to the HMBS family. Monomer. Requires dipyrromethane as cofactor.

It catalyses the reaction 4 porphobilinogen + H2O = hydroxymethylbilane + 4 NH4(+). Its pathway is porphyrin-containing compound metabolism; protoporphyrin-IX biosynthesis; coproporphyrinogen-III from 5-aminolevulinate: step 2/4. Its function is as follows. Tetrapolymerization of the monopyrrole PBG into the hydroxymethylbilane pre-uroporphyrinogen in several discrete steps. This chain is Porphobilinogen deaminase, found in Albidiferax ferrireducens (strain ATCC BAA-621 / DSM 15236 / T118) (Rhodoferax ferrireducens).